A 464-amino-acid polypeptide reads, in one-letter code: Glucan 1,3-beta-glucosidase 3 (464 aa).

The protein belongs to the glycosyl hydrolase 5 (cellulase A) family.

The catalysed reaction is Successive hydrolysis of beta-D-glucose units from the non-reducing ends of (1-&gt;3)-beta-D-glucans, releasing alpha-glucose.. This chain is Glucan 1,3-beta-glucosidase 3 (exg3), found in Schizosaccharomyces pombe (strain 972 / ATCC 24843) (Fission yeast).